The sequence spans 947 residues: Bifunctional glutamine synthetase adenylyltransferase/adenylyl-removing enzyme (947 aa).

Residues methionine 1–glutamate 440 are adenylyl removase. The segment at serine 450–valine 947 is adenylyl transferase.

It belongs to the GlnE family. It depends on Mg(2+) as a cofactor.

The catalysed reaction is [glutamine synthetase]-O(4)-(5'-adenylyl)-L-tyrosine + phosphate = [glutamine synthetase]-L-tyrosine + ADP. The enzyme catalyses [glutamine synthetase]-L-tyrosine + ATP = [glutamine synthetase]-O(4)-(5'-adenylyl)-L-tyrosine + diphosphate. Involved in the regulation of glutamine synthetase GlnA, a key enzyme in the process to assimilate ammonia. When cellular nitrogen levels are high, the C-terminal adenylyl transferase (AT) inactivates GlnA by covalent transfer of an adenylyl group from ATP to specific tyrosine residue of GlnA, thus reducing its activity. Conversely, when nitrogen levels are low, the N-terminal adenylyl removase (AR) activates GlnA by removing the adenylyl group by phosphorolysis, increasing its activity. The regulatory region of GlnE binds the signal transduction protein PII (GlnB) which indicates the nitrogen status of the cell. This Salmonella paratyphi A (strain ATCC 9150 / SARB42) protein is Bifunctional glutamine synthetase adenylyltransferase/adenylyl-removing enzyme.